We begin with the raw amino-acid sequence, 278 residues long: Sulfur carrier protein FdhD (278 aa).

The Cysteine persulfide intermediate role is filled by cysteine 120.

The protein belongs to the FdhD family.

The protein resides in the cytoplasm. Its function is as follows. Required for formate dehydrogenase (FDH) activity. Acts as a sulfur carrier protein that transfers sulfur from IscS to the molybdenum cofactor prior to its insertion into FDH. The sequence is that of Sulfur carrier protein FdhD from Bordetella petrii (strain ATCC BAA-461 / DSM 12804 / CCUG 43448).